The sequence spans 92 residues: uncharacterized protein (92 aa).

The interval 25-53 (AGRGVRREARDTPCRGTAEGLATSQPEDG) is disordered.

This is an uncharacterized protein from Treponema pallidum (strain Nichols).